The sequence spans 249 residues: Phosphate import ATP-binding protein PstB (249 aa).

In terms of domain architecture, ABC transporter spans Leu5–Val244. Gly37 to Ser44 contacts ATP.

This sequence belongs to the ABC transporter superfamily. Phosphate importer (TC 3.A.1.7) family. In terms of assembly, the complex is composed of two ATP-binding proteins (PstB), two transmembrane proteins (PstC and PstA) and a solute-binding protein (PstS).

Its subcellular location is the cell inner membrane. It carries out the reaction phosphate(out) + ATP + H2O = ADP + 2 phosphate(in) + H(+). Its function is as follows. Part of the ABC transporter complex PstSACB involved in phosphate import. Responsible for energy coupling to the transport system. The sequence is that of Phosphate import ATP-binding protein PstB from Salinibacter ruber (strain DSM 13855 / M31).